Consider the following 390-residue polypeptide: Ribonucleoside-diphosphate reductase subunit M2 (390 aa).

Ser-20 is modified (phosphoserine). Thr-33 is subject to Phosphothreonine. A Cy motif is present at residues 49 to 51 (RRI). Residues Asp-139, Glu-170, and His-173 each coordinate Fe cation. The active site involves Tyr-177. Fe cation contacts are provided by Glu-233, Glu-267, and His-270.

It belongs to the ribonucleoside diphosphate reductase small chain family. In terms of assembly, heterodimer of a large and a small subunit. Interacts (via Cy motif and when phosphorylated at Thr-33) with CCNF; the interaction occurs exclusively in G2 and early M. Requires Fe cation as cofactor. Phosphorylation on Ser-20 relieves the inhibitory effect on Wnt signaling. Phosphorylated on Thr-33 by CDK1 and CDK2; predominantly in G2 and M phase. Post-translationally, ubiquitinated by the SCF(CCNF) E3 ubiquitin-protein ligase complex; leading to its degradation by the proteasome.

The protein localises to the cytoplasm. It is found in the nucleus. It carries out the reaction a 2'-deoxyribonucleoside 5'-diphosphate + [thioredoxin]-disulfide + H2O = a ribonucleoside 5'-diphosphate + [thioredoxin]-dithiol. Functionally, provides the precursors necessary for DNA synthesis. Catalyzes the biosynthesis of deoxyribonucleotides from the corresponding ribonucleotides. Inhibits Wnt signaling. The sequence is that of Ribonucleoside-diphosphate reductase subunit M2 (Rrm2) from Rattus norvegicus (Rat).